A 95-amino-acid chain; its full sequence is Putative defensin-like protein 252 (95 aa).

Positions 1 to 27 (MRCVTSFVVLCILMFLVVNNVKVDVKA) are cleaved as a signal peptide. Intrachain disulfides connect C34/C93, C45/C72, C56/C85, and C70/C87.

This sequence belongs to the DEFL family.

The protein localises to the secreted. This chain is Putative defensin-like protein 252 (SCRL13), found in Arabidopsis thaliana (Mouse-ear cress).